The primary structure comprises 270 residues: Phthiotriol/phenolphthiotriol dimycocerosates methyltransferase (270 aa).

The protein belongs to the methyltransferase superfamily. Phthiotriol/phenolphthiotriol dimycocerosates methyltransferase family.

In terms of biological role, catalyzes the methylation of the lipid moiety of the intermediate compounds phthiotriol and glycosylated phenolphthiotriol dimycoserosates to form phthiocerol dimycocerosates (DIM A) and glycosylated phenolphthiocerol dimycocerosates (PGL). The chain is Phthiotriol/phenolphthiotriol dimycocerosates methyltransferase from Mycobacterium leprae (strain TN).